We begin with the raw amino-acid sequence, 293 residues long: Heterogeneous nuclear ribonucleoprotein C-like 4 (293 aa).

One can recognise an RRM domain in the interval 16–87 (SRVFIGNLNT…QVVDINLAAE (72 aa)). Disordered stretches follow at residues 140 to 177 (VVPSKRQRISGNTSRRGKSGFNSKSGKRGSSKSGKLKG) and 208 to 293 (HCKQ…QDDS). Positions 177–208 (GDDLQAIKQELTQIKQKVDSLLENLEKIEKEH) form a coiled coil. Composition is skewed to basic and acidic residues over residues 208 to 222 (HCKQGVEVKNAKSEE) and 229 to 240 (SKKDKTHVKMES). Acidic residues predominate over residues 242–263 (GGADDSVEEGDLLCDDDNEDQG). Residues 269–293 (LIKDDEKGAEEGEDDRDRANGQDDS) are compositionally biased toward basic and acidic residues.

This sequence belongs to the RRM HNRPC family. RALY subfamily.

The protein resides in the nucleus. This chain is Heterogeneous nuclear ribonucleoprotein C-like 4, found in Homo sapiens (Human).